We begin with the raw amino-acid sequence, 234 residues long: Large ribosomal subunit protein uL1 (234 aa).

This sequence belongs to the universal ribosomal protein uL1 family. As to quaternary structure, part of the 50S ribosomal subunit.

In terms of biological role, binds directly to 23S rRNA. The L1 stalk is quite mobile in the ribosome, and is involved in E site tRNA release. Functionally, protein L1 is also a translational repressor protein, it controls the translation of the L11 operon by binding to its mRNA. The chain is Large ribosomal subunit protein uL1 from Wolinella succinogenes (strain ATCC 29543 / DSM 1740 / CCUG 13145 / JCM 31913 / LMG 7466 / NCTC 11488 / FDC 602W) (Vibrio succinogenes).